Here is a 180-residue protein sequence, read N- to C-terminus: Acireductone dioxygenase (180 aa).

Fe(2+) contacts are provided by H97, H99, E103, and H141. Residues H97, H99, E103, and H141 each contribute to the Ni(2+) site.

The protein belongs to the acireductone dioxygenase (ARD) family. In terms of assembly, monomer. It depends on Fe(2+) as a cofactor. Requires Ni(2+) as cofactor.

It carries out the reaction 1,2-dihydroxy-5-(methylsulfanyl)pent-1-en-3-one + O2 = 3-(methylsulfanyl)propanoate + CO + formate + 2 H(+). The enzyme catalyses 1,2-dihydroxy-5-(methylsulfanyl)pent-1-en-3-one + O2 = 4-methylsulfanyl-2-oxobutanoate + formate + 2 H(+). Its pathway is amino-acid biosynthesis; L-methionine biosynthesis via salvage pathway; L-methionine from S-methyl-5-thio-alpha-D-ribose 1-phosphate: step 5/6. Its function is as follows. Catalyzes 2 different reactions between oxygen and the acireductone 1,2-dihydroxy-3-keto-5-methylthiopentene (DHK-MTPene) depending upon the metal bound in the active site. Fe-containing acireductone dioxygenase (Fe-ARD) produces formate and 2-keto-4-methylthiobutyrate (KMTB), the alpha-ketoacid precursor of methionine in the methionine recycle pathway. Ni-containing acireductone dioxygenase (Ni-ARD) produces methylthiopropionate, carbon monoxide and formate, and does not lie on the methionine recycle pathway. This is Acireductone dioxygenase from Cronobacter sakazakii (strain ATCC BAA-894) (Enterobacter sakazakii).